The primary structure comprises 31 residues: Cytochrome b6-f complex subunit 6 (31 aa).

The chain crosses the membrane as a helical span at residues 4 to 24 (ITSYFGFLLAALTITSALFIG).

Belongs to the PetL family. The 4 large subunits of the cytochrome b6-f complex are cytochrome b6, subunit IV (17 kDa polypeptide, PetD), cytochrome f and the Rieske protein, while the 4 small subunits are PetG, PetL, PetM and PetN. The complex functions as a dimer.

It localises to the plastid. Its subcellular location is the chloroplast thylakoid membrane. Functionally, component of the cytochrome b6-f complex, which mediates electron transfer between photosystem II (PSII) and photosystem I (PSI), cyclic electron flow around PSI, and state transitions. PetL is important for photoautotrophic growth as well as for electron transfer efficiency and stability of the cytochrome b6-f complex. The protein is Cytochrome b6-f complex subunit 6 of Humulus lupulus (European hop).